The primary structure comprises 72 residues: DNA-directed RNA polymerase subunit omega (72 aa).

It belongs to the RNA polymerase subunit omega family. In terms of assembly, the RNAP catalytic core consists of 2 alpha, 1 beta, 1 beta' and 1 omega subunit. When a sigma factor is associated with the core the holoenzyme is formed, which can initiate transcription.

The catalysed reaction is RNA(n) + a ribonucleoside 5'-triphosphate = RNA(n+1) + diphosphate. Promotes RNA polymerase assembly. Latches the N- and C-terminal regions of the beta' subunit thereby facilitating its interaction with the beta and alpha subunits. The chain is DNA-directed RNA polymerase subunit omega from Clostridium acetobutylicum (strain ATCC 824 / DSM 792 / JCM 1419 / IAM 19013 / LMG 5710 / NBRC 13948 / NRRL B-527 / VKM B-1787 / 2291 / W).